The chain runs to 108 residues: MIVTTTDVIQGAVIDSYLGIVTAEVVYGSNFLRDFLAGIRDVIGGRTGSYERLFEQGQRKAIEELELRAQRLGANAVIGIEIDTGTINVDQSGVLLLITATGTAVRVR.

This sequence belongs to the UPF0145 family.

The chain is UPF0145 protein Ava_0420 from Trichormus variabilis (strain ATCC 29413 / PCC 7937) (Anabaena variabilis).